A 94-amino-acid chain; its full sequence is DNA-binding protein HU (94 aa).

This sequence belongs to the bacterial histone-like protein family. Homodimer.

Its function is as follows. Histone-like DNA-binding protein which is capable of wrapping DNA to stabilize it, and thus to prevent its denaturation under extreme environmental conditions. The protein is DNA-binding protein HU (hup) of Helicobacter pylori (strain J99 / ATCC 700824) (Campylobacter pylori J99).